The following is a 457-amino-acid chain: tRNA (guanine(37)-N(1))-methyltransferase (457 aa).

S-adenosyl-L-methionine is bound by residues His-225, 263–264 (DL), 291–292 (DG), and Asn-358.

It belongs to the class I-like SAM-binding methyltransferase superfamily. TRM5/TYW2 family. In terms of assembly, monomer.

It is found in the mitochondrion matrix. The protein localises to the nucleus. Its subcellular location is the cytoplasm. It catalyses the reaction guanosine(37) in tRNA + S-adenosyl-L-methionine = N(1)-methylguanosine(37) in tRNA + S-adenosyl-L-homocysteine + H(+). Its function is as follows. Specifically methylates the N1 position of guanosine-37 in various cytoplasmic and mitochondrial tRNAs. Methylation is not dependent on the nature of the nucleoside 5' of the target nucleoside. This is the first step in the biosynthesis of wybutosine (yW), a modified base adjacent to the anticodon of tRNAs and required for accurate decoding. This is tRNA (guanine(37)-N(1))-methyltransferase from Coprinopsis cinerea (strain Okayama-7 / 130 / ATCC MYA-4618 / FGSC 9003) (Inky cap fungus).